A 196-amino-acid polypeptide reads, in one-letter code: uncharacterized protein (196 aa).

It localises to the mitochondrion. This is an uncharacterized protein from Paramecium tetraurelia.